The chain runs to 127 residues: Dual endothelin-1/VEGF signal peptide receptor (127 aa).

The Extracellular portion of the chain corresponds to 1-69 (MSTFYVTAVP…EMKSRWNWGS (69 aa)). Residues 70-88 (ITCIMCFTCVGSQLSMSSS) traverse the membrane as a helical segment. Residues 89–127 (KASNFSGPLQLYQRGIGHITNPYRRPPAPAWPCSSSGTT) lie on the Cytoplasmic side of the membrane.

Prominently expressed in brain and heart tissues. Weakly expressed in aorta, adrenal gland, and lung tissues.

It localises to the cell membrane. Its function is as follows. In the Dahl salt-resistant strain, acts as a dual receptor for both endothelin-1 and the signal sequence of vascular endothelial growth factor A and does not act as a receptor for angiotensin-2. Does not bind the VEGFA mature protein. In the Dahl salt-sensitive strain, acts as a dual endothelin-1/angiotensin-2 receptor that is functionally coupled to a calcium-mobilizing transduction system, responding equivalently to both endothelin-1/EDN1 and angiotensin-2 peptides in a highly specific manner. May play a role in angiogenesis with a significant role in cardiovascular and neural development. The chain is Dual endothelin-1/VEGF signal peptide receptor from Rattus norvegicus (Rat).